Here is a 242-residue protein sequence, read N- to C-terminus: Small ribosomal subunit protein uS3 (242 aa).

Positions 39-110 (IRKFIHKKYG…QVRINVVEVE (72 aa)) constitute a KH type-2 domain. The tract at residues 216–242 (QPMPVGAAPRRRASRRPQQFEDRSNEG) is disordered. A compositionally biased stretch (basic and acidic residues) spans 233-242 (QQFEDRSNEG).

It belongs to the universal ribosomal protein uS3 family. Part of the 30S ribosomal subunit. Forms a tight complex with proteins S10 and S14.

Functionally, binds the lower part of the 30S subunit head. Binds mRNA in the 70S ribosome, positioning it for translation. This Synechococcus sp. (strain CC9605) protein is Small ribosomal subunit protein uS3.